We begin with the raw amino-acid sequence, 251 residues long: Adenosine 5'-phosphosulfate reductase (251 aa).

4 residues coordinate [4Fe-4S] cluster: C121, C122, C204, and C207. C232 acts as the Nucleophile; cysteine thiosulfonate intermediate in catalysis.

The protein belongs to the PAPS reductase family. CysH subfamily. [4Fe-4S] cluster serves as cofactor.

The protein localises to the cytoplasm. It carries out the reaction [thioredoxin]-disulfide + sulfite + AMP + 2 H(+) = adenosine 5'-phosphosulfate + [thioredoxin]-dithiol. It participates in sulfur metabolism; hydrogen sulfide biosynthesis; sulfite from sulfate. Functionally, catalyzes the formation of sulfite from adenosine 5'-phosphosulfate (APS) using thioredoxin as an electron donor. The chain is Adenosine 5'-phosphosulfate reductase from Sinorhizobium fredii (strain USDA 257).